Consider the following 85-residue polypeptide: Phosphocarrier protein HPr (85 aa).

The region spanning 1-85 (MFQQEVTITA…HLVKLMAELE (85 aa)) is the HPr domain. The active-site Pros-phosphohistidine intermediate is H15.

It is found in the cytoplasm. In terms of biological role, general (non sugar-specific) component of the phosphoenolpyruvate-dependent sugar phosphotransferase system (sugar PTS). This major carbohydrate active-transport system catalyzes the phosphorylation of incoming sugar substrates concomitantly with their translocation across the cell membrane. The phosphoryl group from phosphoenolpyruvate (PEP) is transferred to the phosphoryl carrier protein HPr by enzyme I. Phospho-HPr then transfers it to the PTS EIIA domain. This chain is Phosphocarrier protein HPr (ptsH), found in Klebsiella pneumoniae.